The sequence spans 369 residues: Outer membrane protein P2 (369 aa).

Residues 1-20 (MKKTLAALIVGAFAASAANA) form the signal peptide.

It belongs to the Gram-negative porin family. As to quaternary structure, homotrimer.

Its subcellular location is the cell outer membrane. Forms pores that allow passive diffusion of small molecules across the outer membrane. The polypeptide is Outer membrane protein P2 (ompP2) (Haemophilus influenzae).